Here is a 420-residue protein sequence, read N- to C-terminus: Glucose-1-phosphate adenylyltransferase (420 aa).

Alpha-D-glucose 1-phosphate is bound by residues Tyr107, Gly172, 187–188 (EK), and Ser205.

This sequence belongs to the bacterial/plant glucose-1-phosphate adenylyltransferase family. In terms of assembly, homotetramer.

The catalysed reaction is alpha-D-glucose 1-phosphate + ATP + H(+) = ADP-alpha-D-glucose + diphosphate. It participates in glycan biosynthesis; glycogen biosynthesis. Functionally, involved in the biosynthesis of ADP-glucose, a building block required for the elongation reactions to produce glycogen. Catalyzes the reaction between ATP and alpha-D-glucose 1-phosphate (G1P) to produce pyrophosphate and ADP-Glc. In Rhizobium leguminosarum bv. trifolii (strain WSM2304), this protein is Glucose-1-phosphate adenylyltransferase.